A 1781-amino-acid polypeptide reads, in one-letter code: Chitin synthase 7 (1781 aa).

N-linked (GlcNAc...) asparagine glycosylation is found at N133, N534, N629, N644, N655, and N660. Helical transmembrane passes span 741–761 (AWVA…LKFV) and 777–797 (LVLF…IIGF). N889 and N1011 each carry an N-linked (GlcNAc...) asparagine glycan. A helical transmembrane segment spans residues 1048–1068 (LLLAFAIIICIVTAVKFLAAL). Residue N1413 is glycosylated (N-linked (GlcNAc...) asparagine). The next 3 helical transmembrane spans lie at 1444–1464 (LTGT…IYVL), 1471–1491 (IPYI…LIFI), and 1499–1519 (IGWM…LPLY). N1526 carries an N-linked (GlcNAc...) asparagine glycan. Positions 1677–1712 (QANLSPAAGGGHSRSGTALGFSSGSRSPMPDAMRSQ) are disordered. The span at 1690–1702 (RSGTALGFSSGSR) shows a compositional bias: polar residues. One can recognise a DEK-C domain in the interval 1723–1779 (GPTDMAIVESIRSVLCEVDLDTVTKKQVRALVEQRLQTELVGERRTFMDRQIDHELE).

This sequence belongs to the chitin synthase family. Class V subfamily.

It localises to the cell membrane. The enzyme catalyses [(1-&gt;4)-N-acetyl-beta-D-glucosaminyl](n) + UDP-N-acetyl-alpha-D-glucosamine = [(1-&gt;4)-N-acetyl-beta-D-glucosaminyl](n+1) + UDP + H(+). Functionally, polymerizes chitin, a structural polymer of the cell wall and septum, by transferring the sugar moiety of UDP-GlcNAc to the non-reducing end of the growing chitin polymer. Shows additive effects in septum formation with CHS1, CHS2, CHS3A, CHS4, CHS5 and CHS6. Indispensable for perithecia formation and regulates conidiation. Plays an important role in the response to cell wall stress. Also required for hyphal growth and pathogenicity. The sequence is that of Chitin synthase 7 from Gibberella zeae (strain ATCC MYA-4620 / CBS 123657 / FGSC 9075 / NRRL 31084 / PH-1) (Wheat head blight fungus).